The following is a 212-amino-acid chain: Lipid A acyltransferase PagP (212 aa).

A signal peptide spans 1–26 (MSSTYFHSSLLAATLFSVTLTAPAFA). The segment covering 29–44 (NTQNTPQTITTKKPQP) has biased composition (low complexity). Residues 29-50 (NTQNTPQTITTKKPQPAENTFS) are disordered. Active-site residues include His-84, Asp-127, and Ser-128.

This sequence belongs to the lipid A palmitoyltransferase family. Homodimer.

The protein localises to the cell outer membrane. It carries out the reaction a lipid A + a 1,2-diacyl-sn-glycero-3-phosphocholine = a hepta-acyl lipid A + a 2-acyl-sn-glycero-3-phosphocholine. The catalysed reaction is a lipid IVA + a 1,2-diacyl-sn-glycero-3-phosphocholine = a lipid IVB + a 2-acyl-sn-glycero-3-phosphocholine. The enzyme catalyses a lipid IIA + a 1,2-diacyl-sn-glycero-3-phosphocholine = a lipid IIB + a 2-acyl-sn-glycero-3-phosphocholine. Its function is as follows. Transfers a fatty acid residue from the sn-1 position of a phospholipid to the N-linked hydroxyfatty acid chain on the proximal unit of lipid A or its precursors. This Proteus mirabilis (strain HI4320) protein is Lipid A acyltransferase PagP.